Here is a 291-residue protein sequence, read N- to C-terminus: Nucleotide-binding protein Athe_0320 (291 aa).

Residue 9–16 coordinates ATP; sequence GMSGAGKS. Residue 60–63 coordinates GTP; sequence DIRG.

The protein belongs to the RapZ-like family.

Its function is as follows. Displays ATPase and GTPase activities. The protein is Nucleotide-binding protein Athe_0320 of Caldicellulosiruptor bescii (strain ATCC BAA-1888 / DSM 6725 / KCTC 15123 / Z-1320) (Anaerocellum thermophilum).